A 227-amino-acid chain; its full sequence is Cytochrome c oxidase subunit 2 (227 aa).

At 1-14 (MAYPFQLGLQDATS) the chain is on the mitochondrial intermembrane side. The helical transmembrane segment at 15 to 45 (PIMEELLHFHDHTLMIVFLISSLILYIISLM) threads the bilayer. Residues 46–59 (LTTKLTHTSTMDAQ) lie on the Mitochondrial matrix side of the membrane. Residues 60-87 (EVETVWTILPAIILILIALPSLRILYMM) traverse the membrane as a helical segment. Topologically, residues 88–227 (DEINNPSLTV…YFETWSALMV (140 aa)) are mitochondrial intermembrane. Cu cation contacts are provided by histidine 161, cysteine 196, glutamate 198, cysteine 200, histidine 204, and methionine 207. Glutamate 198 serves as a coordination point for Mg(2+). Tyrosine 218 bears the Phosphotyrosine mark.

This sequence belongs to the cytochrome c oxidase subunit 2 family. As to quaternary structure, component of the cytochrome c oxidase (complex IV, CIV), a multisubunit enzyme composed of 14 subunits. The complex is composed of a catalytic core of 3 subunits MT-CO1, MT-CO2 and MT-CO3, encoded in the mitochondrial DNA, and 11 supernumerary subunits COX4I, COX5A, COX5B, COX6A, COX6B, COX6C, COX7A, COX7B, COX7C, COX8 and NDUFA4, which are encoded in the nuclear genome. The complex exists as a monomer or a dimer and forms supercomplexes (SCs) in the inner mitochondrial membrane with NADH-ubiquinone oxidoreductase (complex I, CI) and ubiquinol-cytochrome c oxidoreductase (cytochrome b-c1 complex, complex III, CIII), resulting in different assemblies (supercomplex SCI(1)III(2)IV(1) and megacomplex MCI(2)III(2)IV(2)). Found in a complex with TMEM177, COA6, COX18, COX20, SCO1 and SCO2. Interacts with TMEM177 in a COX20-dependent manner. Interacts with COX20. Interacts with COX16. It depends on Cu cation as a cofactor.

The protein localises to the mitochondrion inner membrane. It catalyses the reaction 4 Fe(II)-[cytochrome c] + O2 + 8 H(+)(in) = 4 Fe(III)-[cytochrome c] + 2 H2O + 4 H(+)(out). Component of the cytochrome c oxidase, the last enzyme in the mitochondrial electron transport chain which drives oxidative phosphorylation. The respiratory chain contains 3 multisubunit complexes succinate dehydrogenase (complex II, CII), ubiquinol-cytochrome c oxidoreductase (cytochrome b-c1 complex, complex III, CIII) and cytochrome c oxidase (complex IV, CIV), that cooperate to transfer electrons derived from NADH and succinate to molecular oxygen, creating an electrochemical gradient over the inner membrane that drives transmembrane transport and the ATP synthase. Cytochrome c oxidase is the component of the respiratory chain that catalyzes the reduction of oxygen to water. Electrons originating from reduced cytochrome c in the intermembrane space (IMS) are transferred via the dinuclear copper A center (CU(A)) of subunit 2 and heme A of subunit 1 to the active site in subunit 1, a binuclear center (BNC) formed by heme A3 and copper B (CU(B)). The BNC reduces molecular oxygen to 2 water molecules using 4 electrons from cytochrome c in the IMS and 4 protons from the mitochondrial matrix. The protein is Cytochrome c oxidase subunit 2 (MT-CO2) of Canis simensis (Ethiopian wolf).